The sequence spans 319 residues: Na(+)-translocating NADH-quinone reductase subunit C (319 aa).

Residues 14–34 (WYVILFIFALSLFSSVFLSTV) traverse the membrane as a helical segment. T283 is modified (FMN phosphoryl threonine).

It belongs to the NqrC family. Composed of six subunits; NqrA, NqrB, NqrC, NqrD, NqrE and NqrF. The cofactor is FMN.

Its subcellular location is the cell inner membrane. The enzyme catalyses a ubiquinone + n Na(+)(in) + NADH + H(+) = a ubiquinol + n Na(+)(out) + NAD(+). In terms of biological role, NQR complex catalyzes the reduction of ubiquinone-1 to ubiquinol by two successive reactions, coupled with the transport of Na(+) ions from the cytoplasm to the periplasm. NqrA to NqrE are probably involved in the second step, the conversion of ubisemiquinone to ubiquinol. In Chlamydia caviae (strain ATCC VR-813 / DSM 19441 / 03DC25 / GPIC) (Chlamydophila caviae), this protein is Na(+)-translocating NADH-quinone reductase subunit C.